A 35-amino-acid chain; its full sequence is UPF0387 membrane protein YohO (35 aa).

The chain crosses the membrane as a helical span at residues 6–26; that stretch reads IGVIALFLFMALGGIGGVMLA.

Belongs to the UPF0387 family.

It localises to the cell inner membrane. The sequence is that of UPF0387 membrane protein YohO from Shigella boydii serotype 4 (strain Sb227).